The chain runs to 601 residues: Glutamine--fructose-6-phosphate aminotransferase [isomerizing] (601 aa).

Residue Cys-2 is the Nucleophile; for GATase activity of the active site. The 217-residue stretch at 2 to 218 folds into the Glutamine amidotransferase type-2 domain; that stretch reads CGIVGYIGYD…DHEIVIVKKD (217 aa). 2 SIS domains span residues 284–423 and 453–591; these read IIND…EHGR and IATD…VDKP. The For Fru-6P isomerization activity role is filled by Lys-596.

As to quaternary structure, homodimer.

Its subcellular location is the cytoplasm. It carries out the reaction D-fructose 6-phosphate + L-glutamine = D-glucosamine 6-phosphate + L-glutamate. Its function is as follows. Catalyzes the first step in hexosamine metabolism, converting fructose-6P into glucosamine-6P using glutamine as a nitrogen source. The chain is Glutamine--fructose-6-phosphate aminotransferase [isomerizing] from Staphylococcus aureus (strain Mu50 / ATCC 700699).